Reading from the N-terminus, the 155-residue chain is MGASVKPAARRNARQFALQAIYSWQITKENVATIEEQFLSGDKYDEEELRASEPALAAPETDVAYFRELLSGVVLSHAELDSKIRPYVSRPMQDLDMMELALLRLAMYEMTRREDVPYKVVINEAIELAKVFAAEDSHKFVNGVLDKAAPHVRKK.

This sequence belongs to the NusB family.

Involved in transcription antitermination. Required for transcription of ribosomal RNA (rRNA) genes. Binds specifically to the boxA antiterminator sequence of the ribosomal RNA (rrn) operons. The polypeptide is Transcription antitermination protein NusB (Vibrio parahaemolyticus serotype O3:K6 (strain RIMD 2210633)).